The following is a 333-amino-acid chain: Protein APEM9 (333 aa).

The Cytoplasmic segment spans residues 1 to 90 (MEATDIWGEI…ELRDVFGEVA (90 aa)). A helical transmembrane segment spans residues 91-102 (AIPVQVLLTGVC). Residues 103-268 (LQISNGSYLG…KVGNTQFSMS (166 aa)) are Peroxisomal-facing. Residues 269–285 (RGKVAVSLVGLIICYAL) traverse the membrane as a helical segment. Topologically, residues 286–333 (KRKRAALIRIIRRQMESTRKAIVDFWKLAFSYQVNPLAAIQSIPSTTT) are cytoplasmic.

In terms of assembly, interacts with PEX6 and PEX19-1, but not with PEX1. Interacts (via N-terminus) with PEX13, and (via N-terminus and C-terminus) with PEX16. Expressed in roots, leaves, stems, flowers, buds and fruits.

Its subcellular location is the peroxisome membrane. Its function is as follows. Involved in peroxisome biogenesis and matrix protein import. Required for pollen maturation and in vivo germination via its role in peroxisomal function, which partially involves jasmonic acid biosynthesis. Transported to peroxisomes via the interaction with PEX19-1. Required for peroxisomal protein import by acting as an anchoring protein for the AAA ATPase complex, which consists of PEX1 and PEX6. The sequence is that of Protein APEM9 from Arabidopsis thaliana (Mouse-ear cress).